Here is a 102-residue protein sequence, read N- to C-terminus: Small ribosomal subunit protein uS10 (102 aa).

It belongs to the universal ribosomal protein uS10 family. Part of the 30S ribosomal subunit.

Functionally, involved in the binding of tRNA to the ribosomes. In Caldanaerobacter subterraneus subsp. tengcongensis (strain DSM 15242 / JCM 11007 / NBRC 100824 / MB4) (Thermoanaerobacter tengcongensis), this protein is Small ribosomal subunit protein uS10.